The sequence spans 302 residues: Dihydroorotate dehydrogenase B (NAD(+)), catalytic subunit (302 aa).

FMN-binding positions include S23 and 47–48; that span reads KS. Residues K47, 71-75, and N125 contribute to the substrate site; that span reads NAMGL. N125 is an FMN binding site. The Nucleophile role is filled by C128. FMN is bound by residues K163 and I189. 190–191 lines the substrate pocket; it reads NT. Residues G215, 241–242, and 263–264 each bind FMN; these read GG and GT.

It belongs to the dihydroorotate dehydrogenase family. Type 1 subfamily. Heterotetramer of 2 PyrK and 2 PyrD type B subunits. FMN serves as cofactor.

It localises to the cytoplasm. It carries out the reaction (S)-dihydroorotate + NAD(+) = orotate + NADH + H(+). Its pathway is pyrimidine metabolism; UMP biosynthesis via de novo pathway; orotate from (S)-dihydroorotate (NAD(+) route): step 1/1. In terms of biological role, catalyzes the conversion of dihydroorotate to orotate with NAD(+) as electron acceptor. In Thermococcus kodakarensis (strain ATCC BAA-918 / JCM 12380 / KOD1) (Pyrococcus kodakaraensis (strain KOD1)), this protein is Dihydroorotate dehydrogenase B (NAD(+)), catalytic subunit (pyrD).